Here is a 201-residue protein sequence, read N- to C-terminus: Large ribosomal subunit protein bL25 (201 aa).

It belongs to the bacterial ribosomal protein bL25 family. CTC subfamily. As to quaternary structure, part of the 50S ribosomal subunit; part of the 5S rRNA/L5/L18/L25 subcomplex. Contacts the 5S rRNA. Binds to the 5S rRNA independently of L5 and L18.

Its function is as follows. This is one of the proteins that binds to the 5S RNA in the ribosome where it forms part of the central protuberance. This is Large ribosomal subunit protein bL25 from Ectopseudomonas mendocina (strain ymp) (Pseudomonas mendocina).